Consider the following 100-residue polypeptide: Urease subunit gamma (100 aa).

This sequence belongs to the urease gamma subunit family. As to quaternary structure, heterotrimer of UreA (gamma), UreB (beta) and UreC (alpha) subunits. Three heterotrimers associate to form the active enzyme.

The protein localises to the cytoplasm. It carries out the reaction urea + 2 H2O + H(+) = hydrogencarbonate + 2 NH4(+). Its pathway is nitrogen metabolism; urea degradation; CO(2) and NH(3) from urea (urease route): step 1/1. The protein is Urease subunit gamma of Arthrobacter sp. (strain FB24).